The chain runs to 235 residues: Claudin-16 (235 aa).

Residues 1–3 are Cytoplasmic-facing; the sequence is MRD. The chain crosses the membrane as a helical span at residues 4–24; the sequence is LLQYIACFFAFFSAGFLIVAT. Over 25 to 79 the chain is Extracellular; the sequence is WTDCWMVNADDSLEVSTKCRGLWWECVTNAFDGIRTCDEYDSILAEHPLKLVVTR. The helical transmembrane segment at 80–100 threads the bilayer; sequence ALMITADILAGFGFLTLLLGL. Over 101-115 the chain is Cytoplasmic; that stretch reads DCVKFLPDEPYIKVR. Residues 116–136 traverse the membrane as a helical segment; that stretch reads ICFVAGATLLIAGTPGIIGSV. Over 137 to 169 the chain is Extracellular; that stretch reads WYAVDVYVERSTLVLHNIFLGIQYKFGWSCWLG. A helical membrane pass occupies residues 170 to 190; the sequence is MAGSLGCFLAGAVLTCCLYLF. Residues 191 to 235 lie on the Cytoplasmic side of the membrane; that stretch reads KDVGPERNYPYSLRKAYSAAGVSMAKSYSAPRTETAKMYAVDTRV. Positions 233–235 match the Interaction with TJP1 motif; the sequence is TRV.

The protein belongs to the claudin family. As to quaternary structure, can form heteropolymeric tight junction strands with other claudins. Interacts with CLDN19. Interacts (via PDZ-binding motif TRV) with TJP1 (via PDZ domain). Cannot form tight junction strands on its own. In terms of tissue distribution, kidney-specific, including the thick ascending limb of Henle (TAL).

It localises to the cell junction. It is found in the tight junction. Its subcellular location is the cell membrane. The catalysed reaction is Mg(2+)(in) = Mg(2+)(out). It carries out the reaction Ca(2+)(in) = Ca(2+)(out). It catalyses the reaction Na(+)(in) = Na(+)(out). The enzyme catalyses K(+)(in) = K(+)(out). The catalysed reaction is Rb(+)(in) = Rb(+)(out). It carries out the reaction Cs(+)(in) = Cs(+)(out). It catalyses the reaction Li(+)(in) = Li(+)(out). Functionally, forms paracellular channels: coassembles with CLDN19 into tight junction strands with cation-selective channels through the strands, conveying epithelial permeability in a process known as paracellular tight junction permeability. Involved in the maintenance of ion gradients along the nephron. In the thick ascending limb (TAL) of Henle's loop, facilitates sodium paracellular permeability from the interstitial compartment to the lumen, contributing to the lumen-positive transepithelial potential that drives paracellular magnesium and calcium reabsorption. The sequence is that of Claudin-16 from Homo sapiens (Human).